The chain runs to 219 residues: MAEITSQMVMQLREKTQVGVLDCKKALAEAEGDLEKAIELLRKKGIMKAGKVKDKVATEGLVGSYIHTGGRIGVLVEVNCQTDFVAKGEEFQQLVRDIAMQIAASPNVEFVSVDDVDQEVKDRELAIEVQREDLLSKPEKIRAQIAQGRVDKLFKERALLEQPFIKDQSISVGELITQKIAKIGENIKVRRFARFVLGEGLEKEEKNFAEEVAAQTGSV.

The involved in Mg(2+) ion dislocation from EF-Tu stretch occupies residues 82–85 (TDFV).

Belongs to the EF-Ts family.

Its subcellular location is the cytoplasm. In terms of biological role, associates with the EF-Tu.GDP complex and induces the exchange of GDP to GTP. It remains bound to the aminoacyl-tRNA.EF-Tu.GTP complex up to the GTP hydrolysis stage on the ribosome. This chain is Elongation factor Ts, found in Gloeobacter violaceus (strain ATCC 29082 / PCC 7421).